We begin with the raw amino-acid sequence, 99 residues long: Plastocyanin A'/A'' (99 aa).

The 99-residue stretch at 1–99 (IEVLLGSDDG…AGMVGKVTVN (99 aa)) folds into the Plastocyanin-like domain. Residues histidine 37, cysteine 84, histidine 87, and methionine 92 each contribute to the Cu cation site.

It belongs to the plastocyanin family. The cofactor is Cu(2+).

It localises to the plastid. It is found in the chloroplast thylakoid membrane. Functionally, participates in electron transfer between P700 and the cytochrome b6-f complex in photosystem I. The chain is Plastocyanin A'/A'' from Nicotiana tabacum (Common tobacco).